Consider the following 499-residue polypeptide: Glycerol kinase (499 aa).

Thr12 is a binding site for ADP. ATP is bound by residues Thr12, Thr13, and Ser14. Thr12 contributes to the sn-glycerol 3-phosphate binding site. Arg16 provides a ligand contact to ADP. Sn-glycerol 3-phosphate-binding residues include Arg82, Glu83, Tyr134, and Asp245. Glycerol-binding residues include Arg82, Glu83, Tyr134, Asp245, and Gln246. 2 residues coordinate ADP: Thr267 and Gly311. ATP-binding residues include Thr267, Gly311, Gln315, and Gly412. Positions 412 and 416 each coordinate ADP.

It belongs to the FGGY kinase family.

The enzyme catalyses glycerol + ATP = sn-glycerol 3-phosphate + ADP + H(+). The protein operates within polyol metabolism; glycerol degradation via glycerol kinase pathway; sn-glycerol 3-phosphate from glycerol: step 1/1. With respect to regulation, inhibited by fructose 1,6-bisphosphate (FBP). Key enzyme in the regulation of glycerol uptake and metabolism. Catalyzes the phosphorylation of glycerol to yield sn-glycerol 3-phosphate. This is Glycerol kinase from Brucella anthropi (strain ATCC 49188 / DSM 6882 / CCUG 24695 / JCM 21032 / LMG 3331 / NBRC 15819 / NCTC 12168 / Alc 37) (Ochrobactrum anthropi).